A 547-amino-acid polypeptide reads, in one-letter code: CDK5RAP1-like protein (547 aa).

The region spanning Arg-79–Gly-194 is the MTTase N-terminal domain. [4Fe-4S] cluster-binding residues include Cys-88, Cys-124, Cys-157, Cys-232, Cys-236, and Cys-239. The region spanning Asp-218–Lys-475 is the Radical SAM core domain. The TRAM domain occupies Gln-478–Gly-543.

The protein belongs to the methylthiotransferase family. MiaB subfamily. [4Fe-4S] cluster serves as cofactor.

In terms of biological role, potential regulator of CDK5 activity. The polypeptide is CDK5RAP1-like protein (Caenorhabditis elegans).